A 471-amino-acid polypeptide reads, in one-letter code: Heat shock 70 kDa protein 13 (471 aa).

A signal peptide spans 1 to 22 (MAGEMTILGSAVLTLLLAGYLA). Residue N184 is glycosylated (N-linked (GlcNAc...) asparagine). Residues 316–339 (NDSQKPQNADSKLPEDQLTPGDGH) are disordered.

This sequence belongs to the heat shock protein 70 family. As to quaternary structure, binds UBQLN2.

The protein resides in the microsome. Its subcellular location is the endoplasmic reticulum. Its function is as follows. Has peptide-independent ATPase activity. The chain is Heat shock 70 kDa protein 13 (Hspa13) from Rattus norvegicus (Rat).